Here is a 311-residue protein sequence, read N- to C-terminus: Malate dehydrogenase (311 aa).

NAD(+)-binding positions include Gly-7–Gly-12 and Asp-32. The substrate site is built by Arg-82 and Arg-88. NAD(+)-binding positions include Asn-95 and Val-118 to Asn-120. The substrate site is built by Asn-120 and Arg-151. The active-site Proton acceptor is the His-175.

This sequence belongs to the LDH/MDH superfamily. MDH type 3 family. As to quaternary structure, homotetramer.

The catalysed reaction is (S)-malate + NAD(+) = oxaloacetate + NADH + H(+). With respect to regulation, strongly inhibited by iodoacetic acid and CuCl(2). Completely inhibited by N-ethylmaleimide and HgCl(2). Its function is as follows. Catalyzes the reversible oxidation of malate to oxaloacetate. Can use both NAD and NADP for malate oxidation, but NADPH cannot be used for oxaloacetate reduction. This is Malate dehydrogenase from Flavobacterium frigidimaris.